Consider the following 475-residue polypeptide: Endoglucanase A (475 aa).

Positions 1 to 26 (MKKTTAFLLCFLMIFTALLPMQNANA) are cleaved as a signal peptide. H147 is an active-site residue. E195 functions as the Proton donor in the catalytic mechanism. Catalysis depends on E332, which acts as the Nucleophile. A Dockerin domain is found at 409–474 (PVIVYGDYNN…LLGMVSKLPS (66 aa)).

This sequence belongs to the glycosyl hydrolase 5 (cellulase A) family.

It catalyses the reaction Endohydrolysis of (1-&gt;4)-beta-D-glucosidic linkages in cellulose, lichenin and cereal beta-D-glucans.. Its function is as follows. The biological conversion of cellulose to glucose generally requires three types of hydrolytic enzymes: (1) Endoglucanases which cut internal beta-1,4-glucosidic bonds; (2) Exocellobiohydrolases that cut the disaccharide cellobiose from the non-reducing end of the cellulose polymer chain; (3) Beta-1,4-glucosidases which hydrolyze the cellobiose and other short cello-oligosaccharides to glucose. The sequence is that of Endoglucanase A (celCCA) from Ruminiclostridium cellulolyticum (strain ATCC 35319 / DSM 5812 / JCM 6584 / H10) (Clostridium cellulolyticum).